A 185-amino-acid chain; its full sequence is Orotate phosphoribosyltransferase (185 aa).

5-phospho-alpha-D-ribose 1-diphosphate is bound by residues arginine 99, lysine 100, lysine 103, and 125-133 (EDVTTTGGS). Orotate-binding residues include threonine 129 and arginine 157.

This sequence belongs to the purine/pyrimidine phosphoribosyltransferase family. PyrE subfamily. Homodimer. It depends on Mg(2+) as a cofactor.

It catalyses the reaction orotidine 5'-phosphate + diphosphate = orotate + 5-phospho-alpha-D-ribose 1-diphosphate. Its pathway is pyrimidine metabolism; UMP biosynthesis via de novo pathway; UMP from orotate: step 1/2. In terms of biological role, catalyzes the transfer of a ribosyl phosphate group from 5-phosphoribose 1-diphosphate to orotate, leading to the formation of orotidine monophosphate (OMP). The sequence is that of Orotate phosphoribosyltransferase from Methanococcus maripaludis (strain DSM 14266 / JCM 13030 / NBRC 101832 / S2 / LL).